The chain runs to 316 residues: Acetyl-coenzyme A carboxylase carboxyl transferase subunit alpha (316 aa).

Positions 36–290 (PLRTQLETLR…GSVISRHLDD (255 aa)) constitute a CoA carboxyltransferase C-terminal domain.

Belongs to the AccA family. In terms of assembly, acetyl-CoA carboxylase is a heterohexamer composed of biotin carboxyl carrier protein (AccB), biotin carboxylase (AccC) and two subunits each of ACCase subunit alpha (AccA) and ACCase subunit beta (AccD).

Its subcellular location is the cytoplasm. It carries out the reaction N(6)-carboxybiotinyl-L-lysyl-[protein] + acetyl-CoA = N(6)-biotinyl-L-lysyl-[protein] + malonyl-CoA. The protein operates within lipid metabolism; malonyl-CoA biosynthesis; malonyl-CoA from acetyl-CoA: step 1/1. Functionally, component of the acetyl coenzyme A carboxylase (ACC) complex. First, biotin carboxylase catalyzes the carboxylation of biotin on its carrier protein (BCCP) and then the CO(2) group is transferred by the carboxyltransferase to acetyl-CoA to form malonyl-CoA. The polypeptide is Acetyl-coenzyme A carboxylase carboxyl transferase subunit alpha (Deinococcus radiodurans (strain ATCC 13939 / DSM 20539 / JCM 16871 / CCUG 27074 / LMG 4051 / NBRC 15346 / NCIMB 9279 / VKM B-1422 / R1)).